The primary structure comprises 83 residues: FMRFamide-like neuropeptide 23 (83 aa).

The signal sequence occupies residues 1–24 (MLLPKISILLYILVVLQETAAVRG). A propeptide spanning residues 25–36 (ALFRSGRAVPFE) is cleaved from the precursor. Phe47 bears the Phenylalanine amide mark. A propeptide spanning residues 50 to 83 (AGMASGVGGGSEGGPDDVKNSYIRVNGEPEIVYQ) is cleaved from the precursor.

The protein belongs to the FARP (FMRFamide related peptide) family. As to expression, each flp gene is expressed in a distinct set of neurons.

The protein localises to the secreted. Its function is as follows. FMRFamides and FMRFamide-like peptides are neuropeptides. The chain is FMRFamide-like neuropeptide 23 (flp-23) from Caenorhabditis elegans.